Here is a 754-residue protein sequence, read N- to C-terminus: Pentatricopeptide repeat-containing protein At3g53700, chloroplastic (754 aa).

The N-terminal 72 residues, methionine 1–leucine 72, are a transit peptide targeting the chloroplast. PPR repeat units follow at residues glutamate 82 to methionine 116, glycine 117 to proline 152, aspartate 153 to proline 187, aspartate 188 to proline 222, aspartate 223 to tryptophan 257, serine 258 to glutamine 288, aspartate 294 to proline 328, aspartate 329 to proline 363, asparagine 364 to proline 398, aspartate 399 to proline 433, aspartate 434 to arginine 468, serine 469 to arginine 503, asparagine 504 to proline 538, aspartate 539 to proline 573, aspartate 574 to leucine 608, threonine 609 to proline 643, and aspartate 645 to proline 680.

Belongs to the PPR family. P subfamily.

It is found in the plastid. Its subcellular location is the chloroplast. May be involved in female gametophyte development. The polypeptide is Pentatricopeptide repeat-containing protein At3g53700, chloroplastic (MEE40) (Arabidopsis thaliana (Mouse-ear cress)).